The sequence spans 273 residues: Large ribosomal subunit protein uL2 (273 aa).

The interval 228–273 is disordered; the sequence is VDHPHGGGEGKTSGGRHPVTPWGFPTKGKKTRKNKRTSKFIVKKRK. Over residues 254–273 the composition is skewed to basic residues; sequence KGKKTRKNKRTSKFIVKKRK.

Belongs to the universal ribosomal protein uL2 family. As to quaternary structure, part of the 50S ribosomal subunit. Forms a bridge to the 30S subunit in the 70S ribosome.

In terms of biological role, one of the primary rRNA binding proteins. Required for association of the 30S and 50S subunits to form the 70S ribosome, for tRNA binding and peptide bond formation. It has been suggested to have peptidyltransferase activity; this is somewhat controversial. Makes several contacts with the 16S rRNA in the 70S ribosome. The protein is Large ribosomal subunit protein uL2 of Rickettsia akari (strain Hartford).